A 452-amino-acid polypeptide reads, in one-letter code: tRNA modification GTPase MnmE (452 aa).

Residues Arg-23, Glu-81, and Lys-120 each contribute to the (6S)-5-formyl-5,6,7,8-tetrahydrofolate site. Residues 217-373 (GIKTAIIGQT…LVLRINQMYL (157 aa)) form the TrmE-type G domain. A K(+)-binding site is contributed by Asn-227. GTP contacts are provided by residues 227–232 (NVGKSS), 246–252 (TDIPGTT), and 271–274 (DTAG). A Mg(2+)-binding site is contributed by Ser-231. Positions 246, 248, and 251 each coordinate K(+). Position 252 (Thr-252) interacts with Mg(2+). (6S)-5-formyl-5,6,7,8-tetrahydrofolate is bound at residue Lys-452.

Belongs to the TRAFAC class TrmE-Era-EngA-EngB-Septin-like GTPase superfamily. TrmE GTPase family. In terms of assembly, homodimer. Heterotetramer of two MnmE and two MnmG subunits. K(+) is required as a cofactor.

It localises to the cytoplasm. Functionally, exhibits a very high intrinsic GTPase hydrolysis rate. Involved in the addition of a carboxymethylaminomethyl (cmnm) group at the wobble position (U34) of certain tRNAs, forming tRNA-cmnm(5)s(2)U34. The protein is tRNA modification GTPase MnmE of Mycoplasma mycoides subsp. mycoides SC (strain CCUG 32753 / NCTC 10114 / PG1).